A 103-amino-acid chain; its full sequence is Large ribosomal subunit protein uL23 (103 aa).

It belongs to the universal ribosomal protein uL23 family. Part of the 50S ribosomal subunit. Contacts protein L29, and trigger factor when it is bound to the ribosome.

Its function is as follows. One of the early assembly proteins it binds 23S rRNA. One of the proteins that surrounds the polypeptide exit tunnel on the outside of the ribosome. Forms the main docking site for trigger factor binding to the ribosome. The polypeptide is Large ribosomal subunit protein uL23 (Chlorobium luteolum (strain DSM 273 / BCRC 81028 / 2530) (Pelodictyon luteolum)).